The primary structure comprises 261 residues: Urease accessory protein UreD (261 aa).

Belongs to the UreD family. In terms of assembly, ureD, UreF and UreG form a complex that acts as a GTP-hydrolysis-dependent molecular chaperone, activating the urease apoprotein by helping to assemble the nickel containing metallocenter of UreC. The UreE protein probably delivers the nickel.

The protein localises to the cytoplasm. In terms of biological role, required for maturation of urease via the functional incorporation of the urease nickel metallocenter. The sequence is that of Urease accessory protein UreD from Haemophilus influenzae (strain ATCC 51907 / DSM 11121 / KW20 / Rd).